Reading from the N-terminus, the 545-residue chain is Phenylalanine--tRNA ligase beta subunit (545 aa).

The B5 domain occupies 268–343 (FLHKIQNVRE…MSIGYNNLEP (76 aa)). Mg(2+) is bound by residues Asp321, Asp327, Glu330, and Asp331.

It belongs to the phenylalanyl-tRNA synthetase beta subunit family. Type 2 subfamily. In terms of assembly, tetramer of two alpha and two beta subunits. Mg(2+) serves as cofactor.

The protein localises to the cytoplasm. The catalysed reaction is tRNA(Phe) + L-phenylalanine + ATP = L-phenylalanyl-tRNA(Phe) + AMP + diphosphate + H(+). This is Phenylalanine--tRNA ligase beta subunit from Saccharolobus islandicus (strain M.14.25 / Kamchatka #1) (Sulfolobus islandicus).